Here is a 242-residue protein sequence, read N- to C-terminus: Methylthioribulose-1-phosphate dehydratase (242 aa).

Positions 1–23 (MTDQREEPQGSNDHLVRSSDPEH) are disordered. Cysteine 102 lines the substrate pocket. The Zn(2+) site is built by histidine 119 and histidine 121. Glutamate 148 functions as the Proton donor/acceptor in the catalytic mechanism. A Zn(2+)-binding site is contributed by histidine 204.

This sequence belongs to the aldolase class II family. MtnB subfamily. Requires Zn(2+) as cofactor.

It localises to the cytoplasm. The enzyme catalyses 5-(methylsulfanyl)-D-ribulose 1-phosphate = 5-methylsulfanyl-2,3-dioxopentyl phosphate + H2O. It functions in the pathway amino-acid biosynthesis; L-methionine biosynthesis via salvage pathway; L-methionine from S-methyl-5-thio-alpha-D-ribose 1-phosphate: step 2/6. Its function is as follows. Catalyzes the dehydration of methylthioribulose-1-phosphate (MTRu-1-P) into 2,3-diketo-5-methylthiopentyl-1-phosphate (DK-MTP-1-P). The sequence is that of Methylthioribulose-1-phosphate dehydratase from Uncinocarpus reesii (strain UAMH 1704).